The chain runs to 252 residues: Hydroxyacylglutathione hydrolase (252 aa).

Zn(2+) contacts are provided by histidine 54, histidine 56, aspartate 58, histidine 59, histidine 113, aspartate 132, and histidine 170.

Belongs to the metallo-beta-lactamase superfamily. Glyoxalase II family. Monomer. Zn(2+) is required as a cofactor.

The catalysed reaction is an S-(2-hydroxyacyl)glutathione + H2O = a 2-hydroxy carboxylate + glutathione + H(+). Its pathway is secondary metabolite metabolism; methylglyoxal degradation; (R)-lactate from methylglyoxal: step 2/2. Its function is as follows. Thiolesterase that catalyzes the hydrolysis of S-D-lactoyl-glutathione to form glutathione and D-lactic acid. The polypeptide is Hydroxyacylglutathione hydrolase (Synechococcus sp. (strain JA-3-3Ab) (Cyanobacteria bacterium Yellowstone A-Prime)).